A 76-amino-acid polypeptide reads, in one-letter code: Exodeoxyribonuclease 7 small subunit (76 aa).

Belongs to the XseB family. In terms of assembly, heterooligomer composed of large and small subunits.

The protein resides in the cytoplasm. It catalyses the reaction Exonucleolytic cleavage in either 5'- to 3'- or 3'- to 5'-direction to yield nucleoside 5'-phosphates.. Functionally, bidirectionally degrades single-stranded DNA into large acid-insoluble oligonucleotides, which are then degraded further into small acid-soluble oligonucleotides. The chain is Exodeoxyribonuclease 7 small subunit from Bacillus mycoides (strain KBAB4) (Bacillus weihenstephanensis).